The chain runs to 105 residues: Insulin (105 aa).

Positions 1–24 (MALWTRLVPLLALLALWAPAPAHA) are cleaved as a signal peptide. Disulfide bonds link Cys-31–Cys-91, Cys-43–Cys-104, and Cys-90–Cys-95. Positions 57 to 82 (EVEGPQVGALELAGGPGAGGLEGPPQ) are cleaved as a propeptide — c peptide.

This sequence belongs to the insulin family. As to quaternary structure, heterodimer of a B chain and an A chain linked by two disulfide bonds.

It localises to the secreted. Functionally, insulin decreases blood glucose concentration. It increases cell permeability to monosaccharides, amino acids and fatty acids. It accelerates glycolysis, the pentose phosphate cycle, and glycogen synthesis in liver. This Ovis aries (Sheep) protein is Insulin (INS).